A 417-amino-acid chain; its full sequence is Gamma-glutamyl phosphate reductase (417 aa).

Belongs to the gamma-glutamyl phosphate reductase family.

Its subcellular location is the cytoplasm. It carries out the reaction L-glutamate 5-semialdehyde + phosphate + NADP(+) = L-glutamyl 5-phosphate + NADPH + H(+). It participates in amino-acid biosynthesis; L-proline biosynthesis; L-glutamate 5-semialdehyde from L-glutamate: step 2/2. Its function is as follows. Catalyzes the NADPH-dependent reduction of L-glutamate 5-phosphate into L-glutamate 5-semialdehyde and phosphate. The product spontaneously undergoes cyclization to form 1-pyrroline-5-carboxylate. The polypeptide is Gamma-glutamyl phosphate reductase (Clostridium novyi (strain NT)).